The following is a 622-amino-acid chain: Chaperone protein HscA homolog (622 aa).

Belongs to the heat shock protein 70 family.

In terms of biological role, chaperone involved in the maturation of iron-sulfur cluster-containing proteins. Has a low intrinsic ATPase activity which is markedly stimulated by HscB. The polypeptide is Chaperone protein HscA homolog (Aromatoleum aromaticum (strain DSM 19018 / LMG 30748 / EbN1) (Azoarcus sp. (strain EbN1))).